A 472-amino-acid chain; its full sequence is Divinyl ether synthase CYP74 (472 aa).

C425 provides a ligand contact to heme.

Belongs to the cytochrome P450 family. It depends on heme as a cofactor. As to expression, expressed mainly in bulbs, and at lower levels in roots.

It catalyses the reaction (13S)-hydroperoxy-(9Z,11E)-octadecadienoate = etheroleate + H2O. The catalysed reaction is (13S)-hydroperoxy-(9Z,11E,15Z)-octadecatrienoate = etherolenate + H2O. The enzyme catalyses (9S)-hydroperoxy-(10E,12Z)-octadecadienoate = colneleate + H2O. It carries out the reaction (9S)-hydroperoxy-(10E,12Z,15Z)-octadecatrienoate = colnelenate + H2O. The protein operates within lipid metabolism; oxylipin biosynthesis. In terms of biological role, divinyl ether synthase involved in oxylipin biosynthesis. Catalyzes the conversion of (13S)-hydroperoxy-(9Z,11E)-octadecadienoate (13-HPOD) to etheroleate and (13S)-hydroperoxy-(9Z,11E,15Z)-octadecatrienoate (13-HPOT) to etherolenate. Catalyzes the conversion of (9S)-hydroperoxy-(10E,12Z)-octadecadienoate (9-HPOD) to colneleate and (9S)-hydroperoxy-(10E,12Z,15Z)-octadecatrienoate (9-HPOT) colnelenate. The protein is Divinyl ether synthase CYP74 of Allium sativum (Garlic).